A 516-amino-acid polypeptide reads, in one-letter code: Rho guanine nucleotide exchange factor 9 (516 aa).

The 60-residue stretch at 8-67 folds into the SH3 domain; the sequence is DSIVSAEAVWDHVTMANRELAFKAGDVIKVLDASNKDWWWGQIDDEEGWFPASFVRLWVN. The interval 100–110 is interaction with GPHN; the sequence is RDQMRANVINE. The 185-residue stretch at 103–287 folds into the DH domain; it reads MRANVINEIM…RNVTQQINER (185 aa). One can recognise a PH domain in the interval 318–425; that stretch reads ELIYTGEMAW…WLRAFREERK (108 aa). The disordered stretch occupies residues 453–480; the sequence is PKQKGVNSARSVPPSYPPPQDPLNHGQY. Ser502 carries the phosphoserine modification.

In terms of assembly, interacts with GPHN. As to expression, detected in brain. Detected at low levels in heart.

The protein localises to the cytoplasm. The protein resides in the postsynaptic density. In terms of biological role, acts as a guanine nucleotide exchange factor (GEF) for CDC42. Promotes formation of GPHN clusters. The sequence is that of Rho guanine nucleotide exchange factor 9 (ARHGEF9) from Homo sapiens (Human).